The chain runs to 353 residues: Casein kinase II subunit alpha (353 aa).

The 286-residue stretch at 39-324 folds into the Protein kinase domain; it reads YQLVRKLGRG…AREAMDHPYF (286 aa). Residues 45–53 and K68 contribute to the ATP site; that span reads LGRGKYSEV. Catalysis depends on D156, which acts as the Proton acceptor. The segment at 334–353 is disordered; that stretch reads MVSSNSPTPNALQGPISTTE.

It belongs to the protein kinase superfamily. Ser/Thr protein kinase family. CK2 subfamily. As to quaternary structure, tetramer of two alpha and two beta chains.

It catalyses the reaction L-seryl-[protein] + ATP = O-phospho-L-seryl-[protein] + ADP + H(+). The catalysed reaction is L-threonyl-[protein] + ATP = O-phospho-L-threonyl-[protein] + ADP + H(+). Functionally, casein kinases are operationally defined by their preferential utilization of acidic proteins such as caseins as substrates. The alpha chain contains the catalytic site. May participate in Wnt signaling. This chain is Casein kinase II subunit alpha, found in Spodoptera frugiperda (Fall armyworm).